The following is a 110-amino-acid chain: Putative caspase recruitment domain-containing protein 17P (110 aa).

In terms of domain architecture, CARD spans M1–A91.

As to quaternary structure, interacts with pro-CASP1. As to expression, ubiquitous.

The protein resides in the cytoplasm. Functionally, regulator of procaspase-1/CASP1 activation implicated in the regulation of the proteolytic maturation of pro-IL-1beta/IL1B and its release during inflammation. Inhibits the release of IL1B in response to LPS in monocytes. However, unlike CASP1, do not induce NF-kappa-B activation. This chain is Putative caspase recruitment domain-containing protein 17P (CARD17P), found in Homo sapiens (Human).